We begin with the raw amino-acid sequence, 31 residues long: Cytochrome b6-f complex subunit 6 (31 aa).

The chain crosses the membrane as a helical span at residues 4–26 (LTSYFGFLLAALTITSALFIGLS).

This sequence belongs to the PetL family. As to quaternary structure, the 4 large subunits of the cytochrome b6-f complex are cytochrome b6, subunit IV (17 kDa polypeptide, PetD), cytochrome f and the Rieske protein, while the 4 small subunits are PetG, PetL, PetM and PetN. The complex functions as a dimer.

Its subcellular location is the plastid. It localises to the chloroplast thylakoid membrane. In terms of biological role, component of the cytochrome b6-f complex, which mediates electron transfer between photosystem II (PSII) and photosystem I (PSI), cyclic electron flow around PSI, and state transitions. PetL is important for photoautotrophic growth as well as for electron transfer efficiency and stability of the cytochrome b6-f complex. This is Cytochrome b6-f complex subunit 6 from Aethionema grandiflorum (Persian stone-cress).